The following is a 350-amino-acid chain: Protein-glutamate methylesterase/protein-glutamine glutaminase 6 (350 aa).

The Response regulatory domain occupies 11-126 (RVLVVDDSAA…LAPVREELLE (116 aa)). The residue at position 62 (D62) is a 4-aspartylphosphate. The 198-residue stretch at 150 to 347 (ELEPARVAVV…ARLVEFARDA (198 aa)) folds into the CheB-type methylesterase domain. Active-site residues include S162, H189, and D289.

It belongs to the CheB family. In terms of processing, phosphorylated by CheA. Phosphorylation of the N-terminal regulatory domain activates the methylesterase activity.

It is found in the cytoplasm. The catalysed reaction is [protein]-L-glutamate 5-O-methyl ester + H2O = L-glutamyl-[protein] + methanol + H(+). It carries out the reaction L-glutaminyl-[protein] + H2O = L-glutamyl-[protein] + NH4(+). In terms of biological role, involved in chemotaxis. Part of a chemotaxis signal transduction system that modulates chemotaxis in response to various stimuli. Catalyzes the demethylation of specific methylglutamate residues introduced into the chemoreceptors (methyl-accepting chemotaxis proteins or MCP) by CheR. Also mediates the irreversible deamidation of specific glutamine residues to glutamic acid. This chain is Protein-glutamate methylesterase/protein-glutamine glutaminase 6, found in Anaeromyxobacter dehalogenans (strain 2CP-C).